The sequence spans 469 residues: Zinc transporter SLC39A7 (469 aa).

Residues 5 to 25 traverse the membrane as a helical segment; it reads LGAPHWVAVGLLTWAALGLLV. Composition is skewed to basic and acidic residues over residues 43–56 and 66–114; these read HGHS…DFHH and HTHE…EHSH. The interval 43–122 is disordered; the sequence is HGHSHRRSHE…SHGGYGESGA (80 aa). His66 bears the Pros-methylhistidine mark. 3 helical membrane-spanning segments follow: residues 138 to 158, 169 to 189, and 214 to 234; these read ALGA…LIPV, LQIL…LHLI, and GPIL…LVVE. Basic residues predominate over residues 242 to 255; that stretch reads GGHGHSHGHGHTHG. The tract at residues 242–313 is disordered; it reads GGHGHSHGHG…QNSEEEKTGS (72 aa). The span at 256 to 266 shows a compositional bias: low complexity; the sequence is HTQGSHGHGTQ. Phosphoserine occurs at positions 275 and 276. Basic and acidic residues predominate over residues 295–313; that stretch reads RLKDGPLRPQNSEEEKTGS. Transmembrane regions (helical) follow at residues 386 to 406, 417 to 437, and 448 to 468; these read LTAI…GGAV, GWVL…SVLP, and SLLE…IAHL.

It belongs to the ZIP transporter (TC 2.A.5) family. KE4/Catsup subfamily. As to quaternary structure, homodimer. Post-translationally, methylation at some His residue by METTL9 leads to reduced zinc-binding. Rapidly phosphorylated by CK2 following Zn(2+) treatment. This phosphorylation is required for efficient cytosolic Zn(2+) release.

The protein resides in the endoplasmic reticulum membrane. It localises to the golgi apparatus. It is found in the cis-Golgi network membrane. It catalyses the reaction Zn(2+)(in) = Zn(2+)(out). Transports Zn(2+) from the endoplasmic reticulum (ER)/Golgi apparatus to the cytosol, playing an essential role in the regulation of cytosolic zinc levels. Acts as a gatekeeper of zinc release from intracellular stores, requiring post-translational activation by phosphorylation, resulting in activation of multiple downstream pathways leading to cell growth and proliferation. Has an essential role in B cell development and is required for proper B cell receptor signaling. Plays an important role in maintaining intestinal epithelial homeostasis and skin dermis development by regulating ER function. Controls cell signaling pathways involved in glucose metabolism in skeletal muscle. Has a protective role against ER stress in different biological contexts. Mediates Zn(2+)-induced ferroptosis. The polypeptide is Zinc transporter SLC39A7 (Canis lupus familiaris (Dog)).